A 155-amino-acid chain; its full sequence is Cathelicidin-1 (155 aa).

The signal sequence occupies residues 1–29 (METQRASLSLGRCSLWLLLLGLALPSASA). Gln30 carries the pyrrolidone carboxylic acid modification. Residues 30–143 (QVLSYREAVL…KQPWAPPQAA (114 aa)) constitute a propeptide that is removed on maturation. 3 cysteine pairs are disulfide-bonded: Cys85–Cys96, Cys107–Cys124, and Cys146–Cys154.

Belongs to the cathelicidin family.

It is found in the secreted. Its function is as follows. Potent microbicidal activity; active against S.aureus and E.coli. This Ovis aries (Sheep) protein is Cathelicidin-1 (CATHL1A).